Reading from the N-terminus, the 809-residue chain is AP-3 complex subunit beta (809 aa).

HEAT repeat units follow at residues Tyr-37–Ser-76, Asp-112–Ala-151, Ile-153–Asn-186, Asp-187–Glu-224, and Lys-524–Asp-561. A phosphoserine mark is found at Ser-693, Ser-698, Ser-724, and Ser-726. 2 disordered regions span residues Phe-708–Gln-739 and Pro-763–Leu-809. The segment covering Gly-722–Gln-739 has biased composition (polar residues). A compositionally biased stretch (acidic residues) spans Glu-772 to Ser-791. Residues Asp-792–Leu-809 show a composition bias toward low complexity.

This sequence belongs to the adaptor complexes large subunit family. In terms of assembly, adaptor protein complex 3 (AP-3) is a heterotetramer composed of 2 large adaptins (APL5 and APL6), a medium adaptin (APM3) and a small adaptin (APS3). Pyrophosphorylated by 5-diphosphoinositol pentakisphosphate (5-IP7). Serine pyrophosphorylation is achieved by Mg(2+)-dependent, but enzyme independent transfer of a beta-phosphate from a inositol pyrophosphate to a pre-phosphorylated serine residue.

The protein resides in the golgi apparatus. The protein localises to the cytoplasmic vesicle. It localises to the clathrin-coated vesicle membrane. Its function is as follows. Part of the AP-3 complex, an adaptor-related complex which is not clathrin-associated. The complex is associated with the Golgi region as well as more peripheral structures. It facilitates the budding of vesicles from the Golgi membrane and may be directly involved in trafficking to the vacuole. Required for the transport via the ALP pathway, which directs the transport of the cargo proteins PHO8 and VAM3 to the vacuole. This Saccharomyces cerevisiae (strain ATCC 204508 / S288c) (Baker's yeast) protein is AP-3 complex subunit beta (APL6).